Consider the following 332-residue polypeptide: Ribosomal RNA-processing protein 8 (332 aa).

The segment at 1–109 is disordered; it reads MGKKRINEVS…EVEKKNEEGD (109 aa). Composition is skewed to basic residues over residues 38–53 and 82–94; these read KKKK…KLAA and KKKK…KKKY. Basic and acidic residues predominate over residues 95 to 109; that stretch reads KPEAAEVEKKNEEGD. Residues His158, Gly193, Asp213, Asp225, Met226, and Cys242 each contribute to the S-adenosyl-L-methionine site.

Belongs to the methyltransferase superfamily. RRP8 family.

Its subcellular location is the nucleus. It localises to the nucleolus. Probable methyltransferase required to silence rDNA. This is Ribosomal RNA-processing protein 8 (rrp-8) from Caenorhabditis briggsae.